A 344-amino-acid polypeptide reads, in one-letter code: N-acetyl-gamma-glutamyl-phosphate reductase (344 aa).

Residue Cys148 is part of the active site.

Belongs to the NAGSA dehydrogenase family. Type 1 subfamily.

The protein localises to the cytoplasm. The catalysed reaction is N-acetyl-L-glutamate 5-semialdehyde + phosphate + NADP(+) = N-acetyl-L-glutamyl 5-phosphate + NADPH + H(+). It participates in amino-acid biosynthesis; L-arginine biosynthesis; N(2)-acetyl-L-ornithine from L-glutamate: step 3/4. Functionally, catalyzes the NADPH-dependent reduction of N-acetyl-5-glutamyl phosphate to yield N-acetyl-L-glutamate 5-semialdehyde. The sequence is that of N-acetyl-gamma-glutamyl-phosphate reductase from Clostridium botulinum (strain Alaska E43 / Type E3).